We begin with the raw amino-acid sequence, 260 residues long: Methylesterase 7 (260 aa).

S84 (acyl-ester intermediate) is an active-site residue. Active-site charge relay system residues include D210 and H238.

The protein belongs to the AB hydrolase superfamily. Methylesterase family.

It carries out the reaction methyl (indol-3-yl)acetate + H2O = (indol-3-yl)acetate + methanol + H(+). It catalyses the reaction methyl salicylate + H2O = salicylate + methanol + H(+). The protein operates within plant hormone biosynthesis. Esterase activity is down-regulated by salicylic acid (SA). In terms of biological role, methylesterase shown to have carboxylesterase activity, methyl indole-3-acetic acid (MeIAA) esterase activity and methyl salicylate (MeSA) esterase activity in vitro. Required to convert methyl salicylate (MeSA) to salicylic acid (SA) as part of the signal transduction pathways that activate systemic acquired resistance in systemic tissue. MeSA is believed to be an inactive form that needs to be demethylated to exert a biological effect. This Arabidopsis thaliana (Mouse-ear cress) protein is Methylesterase 7.